Consider the following 414-residue polypeptide: Triose phosphate/phosphate translocator, chloroplastic (414 aa).

A chloroplast-targeting transit peptide spans 1–78; the sequence is MESRVLTGGA…ILLETSPKRE (78 aa). Residues 79-108 lie on the Chloroplast intermembrane side of the membrane; it reads SIKPCSAAASSSAGSSDSSGDAKVGFFNKA. The chain crosses the membrane as a helical span at residues 109–129; sequence TLTTGFFFFMWYFLNVIFNIL. Over 130 to 141 the chain is Lumenal; it reads NKKIYNYFPYPY. Residues 142–162 form a helical membrane-spanning segment; the sequence is FVSVIHLAVGVVYCLVSWGVG. Over 163–219 the chain is Chloroplast intermembrane; the sequence is LPKRAPIDSTQLKLLTPVAFCHALGHVTSNVSFAAVRVSFTHTVKALEPFFNAAASQ. Residues 220-240 traverse the membrane as a helical segment; it reads FILGQQIPLALWLSLAPVVLG. At 241–284 the chain is on the lumenal side; the sequence is VSMASLTELSFNWLGFTSAMISNISFTYRSIYSKKAMTDMDSTN. The chain crosses the membrane as a helical span at residues 285–304; sequence VYAYISIIALIFCLPPAIFI. Over 305-382 the chain is Chloroplast intermembrane; that stretch reads EGPQLLQHGF…VIFGNKISTQ (78 aa). A helical transmembrane segment spans residues 383–403; sequence TGIGTCIAIAGVAIYSFIKAK. The Lumenal segment spans residues 404–414; that stretch reads MEEEKRQKKAA.

The protein belongs to the TPT transporter family. TPT (TC 2.A.7.9) subfamily.

The protein resides in the plastid. Its subcellular location is the chloroplast membrane. In terms of biological role, mediates the export of fixed carbons from the chloroplasts into the cytosol in the form of triose phosphates. The protein is Triose phosphate/phosphate translocator, chloroplastic (TPT) of Solanum tuberosum (Potato).